Consider the following 228-residue polypeptide: Methylthioribulose-1-phosphate dehydratase (228 aa).

Cys-92 contacts substrate. His-110 and His-112 together coordinate Zn(2+). The active-site Proton donor/acceptor is Glu-135. His-192 is a binding site for Zn(2+).

The protein belongs to the aldolase class II family. MtnB subfamily. Zn(2+) serves as cofactor.

The protein localises to the cytoplasm. It is found in the nucleus. The enzyme catalyses 5-(methylsulfanyl)-D-ribulose 1-phosphate = 5-methylsulfanyl-2,3-dioxopentyl phosphate + H2O. It participates in amino-acid biosynthesis; L-methionine biosynthesis via salvage pathway; L-methionine from S-methyl-5-thio-alpha-D-ribose 1-phosphate: step 2/6. Its function is as follows. Catalyzes the dehydration of methylthioribulose-1-phosphate (MTRu-1-P) into 2,3-diketo-5-methylthiopentyl-1-phosphate (DK-MTP-1-P). The chain is Methylthioribulose-1-phosphate dehydratase from Schizosaccharomyces pombe (strain 972 / ATCC 24843) (Fission yeast).